The chain runs to 22 residues: Conantokin-Oc (22 aa).

Residues 1–22 (GEEERKAMAELEAKKAQEALKA) form a disordered region. Glu-3, Glu-4, Glu-10, and Glu-18 each carry 4-carboxyglutamate.

As to expression, expressed by the venom duct.

The protein resides in the secreted. In terms of biological role, conantokins inhibit N-methyl-D-aspartate (NMDA) receptors. The sequence is that of Conantokin-Oc from Conus ochroleucus (Perfect cone).